A 117-amino-acid polypeptide reads, in one-letter code: NADH-ubiquinone oxidoreductase chain 3 (117 aa).

The next 3 helical transmembrane spans lie at 4–24 (FLGI…LLGL), 61–81 (LVAI…PWAL), and 86–106 (IGYF…VGFI).

Belongs to the complex I subunit 3 family.

It is found in the mitochondrion membrane. It carries out the reaction a ubiquinone + NADH + 5 H(+)(in) = a ubiquinol + NAD(+) + 4 H(+)(out). Its function is as follows. Core subunit of the mitochondrial membrane respiratory chain NADH dehydrogenase (Complex I) that is believed to belong to the minimal assembly required for catalysis. Complex I functions in the transfer of electrons from NADH to the respiratory chain. The immediate electron acceptor for the enzyme is believed to be ubiquinone. This Prototheca wickerhamii protein is NADH-ubiquinone oxidoreductase chain 3 (NAD3).